Reading from the N-terminus, the 477-residue chain is Bifunctional protein HldE (477 aa).

Positions 1–318 (MKVTLPEFER…ENAVRGRAET (318 aa)) are ribokinase. 195–198 (NLSE) is an ATP binding site. Residue D264 is part of the active site. The tract at residues 344 to 477 (MTNGVFDILH…IKKIQKDSDK (134 aa)) is cytidylyltransferase.

This sequence in the N-terminal section; belongs to the carbohydrate kinase PfkB family. It in the C-terminal section; belongs to the cytidylyltransferase family. Homodimer.

It catalyses the reaction D-glycero-beta-D-manno-heptose 7-phosphate + ATP = D-glycero-beta-D-manno-heptose 1,7-bisphosphate + ADP + H(+). It carries out the reaction D-glycero-beta-D-manno-heptose 1-phosphate + ATP + H(+) = ADP-D-glycero-beta-D-manno-heptose + diphosphate. The protein operates within nucleotide-sugar biosynthesis; ADP-L-glycero-beta-D-manno-heptose biosynthesis; ADP-L-glycero-beta-D-manno-heptose from D-glycero-beta-D-manno-heptose 7-phosphate: step 1/4. Its pathway is nucleotide-sugar biosynthesis; ADP-L-glycero-beta-D-manno-heptose biosynthesis; ADP-L-glycero-beta-D-manno-heptose from D-glycero-beta-D-manno-heptose 7-phosphate: step 3/4. In terms of biological role, catalyzes the phosphorylation of D-glycero-D-manno-heptose 7-phosphate at the C-1 position to selectively form D-glycero-beta-D-manno-heptose-1,7-bisphosphate. Its function is as follows. Catalyzes the ADP transfer from ATP to D-glycero-beta-D-manno-heptose 1-phosphate, yielding ADP-D-glycero-beta-D-manno-heptose. The sequence is that of Bifunctional protein HldE from Klebsiella pneumoniae (strain 342).